The following is a 438-amino-acid chain: Serine hydroxymethyltransferase (438 aa).

Residues L133 and 137–139 each bind (6S)-5,6,7,8-tetrahydrofolate; that span reads GHL. K242 is modified (N6-(pyridoxal phosphate)lysine).

It belongs to the SHMT family. As to quaternary structure, homodimer. Pyridoxal 5'-phosphate serves as cofactor.

It is found in the cytoplasm. It carries out the reaction (6R)-5,10-methylene-5,6,7,8-tetrahydrofolate + glycine + H2O = (6S)-5,6,7,8-tetrahydrofolate + L-serine. It participates in one-carbon metabolism; tetrahydrofolate interconversion. Its pathway is amino-acid biosynthesis; glycine biosynthesis; glycine from L-serine: step 1/1. Functionally, catalyzes the reversible interconversion of serine and glycine with tetrahydrofolate (THF) serving as the one-carbon carrier. This reaction serves as the major source of one-carbon groups required for the biosynthesis of purines, thymidylate, methionine, and other important biomolecules. Also exhibits THF-independent aldolase activity toward beta-hydroxyamino acids, producing glycine and aldehydes, via a retro-aldol mechanism. This Brucella canis (strain ATCC 23365 / NCTC 10854 / RM-666) protein is Serine hydroxymethyltransferase.